The chain runs to 275 residues: 2,3,4,5-tetrahydropyridine-2,6-dicarboxylate N-succinyltransferase (275 aa).

Residues Arg-104 and Asp-141 each coordinate substrate.

Belongs to the transferase hexapeptide repeat family. As to quaternary structure, homotrimer.

It is found in the cytoplasm. It catalyses the reaction (S)-2,3,4,5-tetrahydrodipicolinate + succinyl-CoA + H2O = (S)-2-succinylamino-6-oxoheptanedioate + CoA. It functions in the pathway amino-acid biosynthesis; L-lysine biosynthesis via DAP pathway; LL-2,6-diaminopimelate from (S)-tetrahydrodipicolinate (succinylase route): step 1/3. This Haemophilus influenzae (strain 86-028NP) protein is 2,3,4,5-tetrahydropyridine-2,6-dicarboxylate N-succinyltransferase.